The chain runs to 135 residues: ATP synthase epsilon chain, chloroplastic (135 aa).

It belongs to the ATPase epsilon chain family. F-type ATPases have 2 components, CF(1) - the catalytic core - and CF(0) - the membrane proton channel. CF(1) has five subunits: alpha(3), beta(3), gamma(1), delta(1), epsilon(1). CF(0) has three main subunits: a, b and c.

The protein resides in the plastid. It is found in the chloroplast thylakoid membrane. Produces ATP from ADP in the presence of a proton gradient across the membrane. This is ATP synthase epsilon chain, chloroplastic from Marchantia polymorpha (Common liverwort).